We begin with the raw amino-acid sequence, 239 residues long: Aspartate/glutamate leucyltransferase (239 aa).

This sequence belongs to the R-transferase family. Bpt subfamily.

The protein localises to the cytoplasm. The catalysed reaction is N-terminal L-glutamyl-[protein] + L-leucyl-tRNA(Leu) = N-terminal L-leucyl-L-glutamyl-[protein] + tRNA(Leu) + H(+). The enzyme catalyses N-terminal L-aspartyl-[protein] + L-leucyl-tRNA(Leu) = N-terminal L-leucyl-L-aspartyl-[protein] + tRNA(Leu) + H(+). In terms of biological role, functions in the N-end rule pathway of protein degradation where it conjugates Leu from its aminoacyl-tRNA to the N-termini of proteins containing an N-terminal aspartate or glutamate. In Campylobacter jejuni (strain RM1221), this protein is Aspartate/glutamate leucyltransferase.